A 591-amino-acid polypeptide reads, in one-letter code: Adsorption protein P2 (591 aa).

Cysteines 254 and 277 form a disulfide.

The protein resides in the virion. Functionally, adsorption protein. In association with P31 and trimeric P5, forms the spike complexes located at the 5-fold vertices of the capsid. Involved in recognition and attachment to the receptor on the surface of the host. Likely triggers the processes of vertex disassembly, membrane tube formation, and subsequent DNA injection. Essential for viral infectivity. The chain is Adsorption protein P2 (II) from Acinetobacter calcoaceticus (Arthrobacter siderocapsulatus).